Consider the following 185-residue polypeptide: Photosystem I assembly protein Ycf4 (185 aa).

A run of 2 helical transmembrane segments spans residues 24–44 (YIIGGMLTIGGIGFLLASISS) and 66–86 (IIMGAYGVIANLLNFYLWYLV).

This sequence belongs to the Ycf4 family.

The protein localises to the cellular thylakoid membrane. Its function is as follows. Seems to be required for the assembly of the photosystem I complex. This chain is Photosystem I assembly protein Ycf4, found in Prochlorococcus marinus (strain AS9601).